A 199-amino-acid polypeptide reads, in one-letter code: Holliday junction branch migration complex subunit RuvA (199 aa).

Residues Met1 to Thr63 are domain I. The segment at Thr64–Ala142 is domain II. Residues Gly143–Leu153 form a flexible linker region. Residues Leu153–Pro199 are domain III.

This sequence belongs to the RuvA family. As to quaternary structure, homotetramer. Forms an RuvA(8)-RuvB(12)-Holliday junction (HJ) complex. HJ DNA is sandwiched between 2 RuvA tetramers; dsDNA enters through RuvA and exits via RuvB. An RuvB hexamer assembles on each DNA strand where it exits the tetramer. Each RuvB hexamer is contacted by two RuvA subunits (via domain III) on 2 adjacent RuvB subunits; this complex drives branch migration. In the full resolvosome a probable DNA-RuvA(4)-RuvB(12)-RuvC(2) complex forms which resolves the HJ.

The protein resides in the cytoplasm. In terms of biological role, the RuvA-RuvB-RuvC complex processes Holliday junction (HJ) DNA during genetic recombination and DNA repair, while the RuvA-RuvB complex plays an important role in the rescue of blocked DNA replication forks via replication fork reversal (RFR). RuvA specifically binds to HJ cruciform DNA, conferring on it an open structure. The RuvB hexamer acts as an ATP-dependent pump, pulling dsDNA into and through the RuvAB complex. HJ branch migration allows RuvC to scan DNA until it finds its consensus sequence, where it cleaves and resolves the cruciform DNA. The protein is Holliday junction branch migration complex subunit RuvA of Shouchella clausii (strain KSM-K16) (Alkalihalobacillus clausii).